The following is a 177-amino-acid chain: Thymidine kinase (177 aa).

11–18 is a binding site for ATP; the sequence is GPMFSGKS. Residue Glu-83 is the Proton acceptor of the active site. Residue Phe-113 coordinates substrate. Zn(2+) is bound by residues Cys-138 and Cys-141. 157 to 161 contacts substrate; it reads IEIIG. Residues Cys-170 and Cys-173 each coordinate Zn(2+).

The protein belongs to the thymidine kinase family. Homotetramer. Two molecules of substrate bind to each enzyme tetramer.

The catalysed reaction is thymidine + ATP = dTMP + ADP + H(+). In terms of biological role, phosphorylates thymidine and thymidine analogs, such as azidothymidine (AZT). Part of the salvage pathway for pyrimidine deoxyribonucleotide synthesis. The sequence is that of Thymidine kinase (OPG101) from Vaccinia virus (strain Tian Tan) (VACV).